Here is a 339-residue protein sequence, read N- to C-terminus: Ferrochelatase (339 aa).

The Fe cation site is built by histidine 202 and glutamate 283.

Belongs to the ferrochelatase family.

It is found in the cytoplasm. The catalysed reaction is heme b + 2 H(+) = protoporphyrin IX + Fe(2+). Its pathway is porphyrin-containing compound metabolism; protoheme biosynthesis; protoheme from protoporphyrin-IX: step 1/1. Catalyzes the ferrous insertion into protoporphyrin IX. This Psychrobacter cryohalolentis (strain ATCC BAA-1226 / DSM 17306 / VKM B-2378 / K5) protein is Ferrochelatase.